The primary structure comprises 3029 residues: Polycystin-1-related protein (3029 aa).

A signal peptide spans 1–21 (MAKHLYLAFSLILVPFLVSKA). The Extracellular portion of the chain corresponds to 22–1685 (KQTSNGEVPW…RDTDKLKNSP (1664 aa)). In terms of domain architecture, WSC spans 29–121 (VPWLVGCYRY…KNVASVYSTA (93 aa)). 2 consecutive PKD domains span residues 364-450 (EGHC…IKGV) and 546-634 (DHLF…PECY). Residues 633-1476 (CYTRGVAIVG…NPYFSDMNHT (844 aa)) form the REJ domain. 3 disordered regions span residues 754–773 (RKGP…HPDE), 909–931 (CPSD…SNSP), and 989–1051 (TSAI…PNKP). Polar residues predominate over residues 918–931 (VTPSTTPMTDSNSP). Positions 997–1013 (SGDVDDDEVNNDNDDDS) are enriched in acidic residues. Polar residues predominate over residues 1020 to 1047 (TLPTPLSMTNANSVNKPIITTDTPSFNK). Positions 1525–1671 (RNVHVINQTA…GFIQPPNSLH (147 aa)) constitute a GAIN-B domain. Disulfide bonds link cysteine 1624–cysteine 1651 and cysteine 1639–cysteine 1653. The segment at 1624–1671 (CFYWNKRGKHWASDGCRLEKSINHTLVCRCNHLTAFSGGFIQPPNSLH) is GPS. A helical membrane pass occupies residues 1686-1706 (LTMVLVISILVMYFLLLGFCV). Over 1707-1895 (KADRHDKKKL…SYSRFTRAQR (189 aa)) the chain is Cytoplasmic. One can recognise a PLAT domain in the interval 1733-1851 (SRFQLSVQTG…GNGKVECELF (119 aa)). The chain crosses the membrane as a helical span at residues 1896-1916 (LSCCLSLLLSFLCVNIAWYRP). The Extracellular portion of the chain corresponds to 1917–1933 (KIEVTEVLGVLDVSANS). A helical transmembrane segment spans residues 1934–1954 (IMIGVLGSLMVLPVNFLWIFF). Residues 1955–2101 (FRYSRRSLSR…YRSKFSLPHG (147 aa)) are Cytoplasmic-facing. Residues 2102-2122 (FVYVAWFGCLITGTVTSAITI) form a helical membrane-spanning segment. Residues 2123–2140 (WYGLSFGWDLSVHWFQSL) are Extracellular-facing. Residues 2141–2161 (VFSLLESLLLSQPIMVLAFIF) traverse the membrane as a helical segment. The Cytoplasmic portion of the chain corresponds to 2162–2250 (YMSHKTKSGK…SLKNRVLRNY (89 aa)). Residues 2251 to 2271 (VVELFVFIMFFVVTCALVFSV) traverse the membrane as a helical segment. Over 2272-2462 (ADPDVYHLNQ…GYSYFIRFTK (191 aa)) the chain is Extracellular. A helical transmembrane segment spans residues 2463-2483 (LLFVVFFLYLLQHEFFLALKM). At 2484 to 2496 (TFSYFTNFWRVYQ) the chain is on the cytoplasmic side. A helical transmembrane segment spans residues 2497-2517 (LLTIAISSACIVSYIHWSLSL). Residues 2518–2538 (YALLREVETERQSRVFYLSRQ) are Extracellular-facing. The chain crosses the membrane as a helical span at residues 2539 to 2559 (ISWSQGFLQASYSLLLFLLLI). Over 2560–2586 (RCLHLLRPFRFVRHFGRILSTSISSLL) the chain is Cytoplasmic. The helical transmembrane segment at 2587-2607 (ACWVFGFILVVAFAHPGYLLF) threads the bilayer. Over 2608–2651 (GSVHSSFKSFGDAFLLVTSFFRLEGVARYQDFALEEQTLLLSTY) the chain is Extracellular. A helical transmembrane segment spans residues 2652–2672 (FALFLIGFCVIVRGSTAAVVL). The Cytoplasmic segment spans residues 2673-3029 (HGIRCLGKRR…PVGQRVVSAM (357 aa)). A disordered region spans residues 2704 to 2726 (KKPKKPRPNSVSDLEETDDEDDL). Residues 2716 to 2726 (DLEETDDEDDL) show a composition bias toward acidic residues.

Belongs to the polycystin family. Heterodimer of 2 chains generated by proteolytic processing; the large extracellular N-terminal fragment and the membrane-bound C-terminal fragment predominantly remain associated and non-covalently linked. In terms of processing, autoproteolytically processed at the GPS region of the GAIN-B domain; this cleavage modulates receptor activity. In terms of tissue distribution, component of the acid-insoluble and acid-soluble organic matrix of the aragonitic skeleton (at protein level).

The protein localises to the membrane. This is Polycystin-1-related protein from Acropora millepora (Staghorn coral).